The chain runs to 451 residues: Lipase member H (451 aa).

Residues 1 to 16 (MLRLCFLLSFMCLVKS) form the signal peptide. Asn66 is a glycosylation site (N-linked (GlcNAc...) asparagine). Ser154 serves as the catalytic Nucleophile. Residue Asp178 is the Charge relay system of the active site. Cys233 and Cys246 are joined by a disulfide. His248 serves as the catalytic Charge relay system. 3 disulfides stabilise this stretch: Cys270/Cys281, Cys284/Cys292, and Cys427/Cys446.

This sequence belongs to the AB hydrolase superfamily. Lipase family. Interacts with TTMP/C3orf52.

The protein resides in the secreted. Its subcellular location is the cell membrane. The enzyme catalyses 1-hexadecanoyl-2-(9Z-octadecenoyl)-sn-glycero-3-phosphate + H2O = 2-(9Z-octadecenoyl)-sn-glycero-3-phosphate + hexadecanoate + H(+). In terms of biological role, hydrolyzes specifically phosphatidic acid (PA) to produce 2-acyl lysophosphatidic acid (LPA; a potent bioactive lipid mediator) and fatty acid. Does not hydrolyze other phospholipids, like phosphatidylserine (PS), phosphatidylcholine (PC) and phosphatidylethanolamine (PE) or triacylglycerol (TG). This Rattus norvegicus (Rat) protein is Lipase member H (Liph).